Here is a 389-residue protein sequence, read N- to C-terminus: Na(+)/H(+) antiporter NhaA (389 aa).

11 helical membrane-spanning segments follow: residues 14–34, 59–79, 95–115, 124–144, 154–174, 177–197, 213–233, 257–277, 292–312, 328–348, and 363–383; these read AGGI…NSPL, LILW…GLEV, SLPT…YLLF, AGWA…MALL, VFLL…IALF, TDLS…LVGL, LILW…GVII, PWST…VYVG, IALG…YIAV, IAPV…IASL, and LGTL…LSKV.

It belongs to the NhaA Na(+)/H(+) (TC 2.A.33) antiporter family.

It localises to the cell inner membrane. It catalyses the reaction Na(+)(in) + 2 H(+)(out) = Na(+)(out) + 2 H(+)(in). In terms of biological role, na(+)/H(+) antiporter that extrudes sodium in exchange for external protons. This is Na(+)/H(+) antiporter NhaA from Shewanella baltica (strain OS223).